The chain runs to 2864 residues: Genome polyprotein (2864 aa).

Polar residues-rich tracts occupy residues 1 to 10 (MPVISTQTSP) and 21 to 32 (QTQASYPVSIKT). Residues 1–49 (MPVISTQTSPVPAPRTRKNKQTQASYPVSIKTSVERGQRAKRKVQRDAR) form a disordered region. A helical transmembrane segment spans residues 133–153 (WATGWFGVHLFVVCLLSLACP). Residues Asn165, Asn212, and Asn264 are each glycosylated (N-linked (GlcNAc...) asparagine; by host). The helical transmembrane segment at 324–344 (LIYYASRGKWYQLLLALMLYI) threads the bilayer. Asn380, Asn400, Asn422, Asn446, Asn467, and Asn512 each carry an N-linked (GlcNAc...) asparagine; by host glycan. Transmembrane regions (helical) follow at residues 582–602 (AVVL…AYLC), 628–648 (AGWD…FFIC), 660–680 (LLGF…AAAA), 706–726 (PRIA…LLHL), and 737–757 (IIGG…RFGF). Residue Asn782 is glycosylated (N-linked (GlcNAc...) asparagine; by host). 2 helical membrane-spanning segments follow: residues 790 to 810 (FLLV…TFCV) and 847 to 867 (WYSH…GVFF). The Peptidase C18 domain occupies 819–940 (TSSAASFFGT…AMPPDGWAIT (122 aa)). Active-site for protease NS2 activity; shared with dimeric partner residues include His870, Glu888, and Cys909. Residues 941 to 1122 (APFTLQCLSE…VCAGYHPQYT (182 aa)) form the Peptidase S29 domain. Active-site charge relay system; for serine protease NS3 activity residues include His997 and Asp1021. Zn(2+) contacts are provided by Cys1037 and Cys1039. Residue Asn1057 is glycosylated (N-linked (GlcNAc...) asparagine; by host). Ser1079 functions as the Charge relay system; for serine protease NS3 activity in the catalytic mechanism. Cys1085 and His1089 together coordinate Zn(2+). The Helicase ATP-binding domain maps to 1131–1281 (PTVPNEYSVQ…ANITEIQLTD (151 aa)). 1144–1151 (APTGSGKS) serves as a coordination point for ATP. Mg(2+)-binding residues include Ser1151 and Glu1229. A DECH box motif is present at residues 1228-1231 (DECH). N-linked (GlcNAc...) asparagine; by host glycosylation occurs at Asn1273. The Helicase C-terminal domain maps to 1284–1449 (TIPFHGKKIK…GLSSTEAQTI (166 aa)). A glycan (N-linked (GlcNAc...) asparagine; by host) is linked at Asn1559. Transmembrane regions (helical) follow at residues 1565-1585 (ALAV…FGAT), 1653-1673 (FLGP…GLVT), 1678-1698 (PFAS…PHKI), 1722-1742 (FMMA…GFVF), and 1783-1803 (AAGV…TAGP). Cys1863 carries S-palmitoyl cysteine; by host lipidation. Residues 1864–1884 (GLIAWGLEIWQYVCNFFVICF) traverse the membrane as a helical segment. Zn(2+)-binding residues include Cys1905, Cys1923, Cys1925, and Cys1947. 2 disordered regions span residues 2139–2178 (TGSL…SPPV) and 2209–2266 (GPDD…TKKK). Residues 2226–2240 (SDGSWSTTTTASSYV) are compositionally biased toward polar residues. Residues 2485–2603 (AVGATCDTVC…IWKSAGADAD (119 aa)) enclose the RdRp catalytic domain. Mg(2+) contacts are provided by Asp2491, Asp2589, and Asp2590. N-linked (GlcNAc...) asparagine; by host glycosylation is found at Asn2640 and Asn2722. A helical membrane pass occupies residues 2844-2864 (VKYLAVIVFALGLIAVGLAIS).

In terms of assembly, homooligomer. Interacts with E1 (via C-terminus). Interacts with the non-structural protein 5A. Part of the viral assembly initiation complex composed of NS2, E1, E2, NS3, NS4A, NS5A and the core protein. Forms a heterodimer with envelope glycoprotein E2. Interacts with the core protein. Interacts with protease NS2. Part of the viral assembly initiation complex composed of NS2, E1, E2, NS3, NS4A, NS5A and the core protein. As to quaternary structure, forms a heterodimer with envelope glycoprotein E1. Part of the viral assembly initiation complex composed of NS2, E1, E2, NS3, NS4A, NS5A and the core protein. In terms of assembly, homodimer. Interacts with envelope glycoprotein E1. Interacts with envelope glycoprotein E2. Interacts with viroporin p7. Interacts with serine protease/helicase NS3. Part of the replication complex composed of NS2, NS3, NS4A, NS4B, NS5A and the RNA-directed RNA polymerase embedded in an ER-derived membranous web. Part of the viral assembly initiation complex composed of NS2, E1, E2, NS3, NS4A, NS5A and the core protein. Interacts with protease NS2. Interacts with non-structural protein 4A; this interaction stabilizes the folding of NS3 serine protease. NS3-NS4A interaction is essential for NS3 activation and allows membrane anchorage of the latter. Interacts with host MAVS; this interaction leads to the cleavage and inhibition of host MAVS. Part of the replication complex composed of NS2, NS3, NS4A, NS4B, NS5A and the RNA-directed RNA polymerase embedded in an ER-derived membranous web. Part of the viral assembly initiation complex composed of NS2, E1, E2, NS3, NS4A, NS5A and the core protein. As to quaternary structure, interacts with NS3 serine protease; this interaction stabilizes the folding of NS3 serine protease. NS3-NS4A interaction is essential for NS3 activation and allows membrane anchorage of the latter. Interacts with non-structural protein 5A (via N-terminus). Part of the replication complex composed of NS2, NS3, NS4A, NS4B, NS5A and the RNA-directed RNA polymerase embedded in an ER-derived membranous web. Part of the viral assembly initiation complex composed of NS2, E1, E2, NS3, NS4A, NS5A and the core protein. In terms of assembly, monomer. Homodimer; dimerization is required for RNA-binding. Interacts with the core protein. Interacts (via N-terminus) with non-structural protein 4A. Interacts with non-structural protein 4B. Interacts with RNA-directed RNA polymerase. Part of the viral assembly initiation complex composed of NS2, E1, E2, NS3, NS4A, NS5A and the core protein. Part of the replication complex composed of NS2, NS3, NS4A, NS4B, NS5A and the RNA-directed RNA polymerase. Requires Zn(2+) as cofactor. It depends on Mg(2+) as a cofactor. Mn(2+) is required as a cofactor. Specific enzymatic cleavages in vivo yield mature proteins. The structural proteins, core, E1, E2 and p7 are produced by proteolytic processing by host signal peptidases. The other proteins (p7, NS2, NS3, NS4A, NS4B, NS5A and NS5B) are cleaved by the viral proteases. Autoprocessing between NS2 and NS3 is mediated by the NS2 cysteine protease catalytic domain and regulated by the NS3 N-terminal domain. P13 may be further cleaved into p6 and p7 if the internal cleavage site is used. In terms of processing, highly N-glycosylated. Post-translationally, palmitoylated. This modification may play a role in its polymerization or in protein-protein interactions.

The protein localises to the virion. The protein resides in the host cytoplasm. Its subcellular location is the host lipid droplet. It localises to the virion membrane. It is found in the host endoplasmic reticulum membrane. The protein localises to the host perinuclear region. The protein resides in the host mitochondrion. Its subcellular location is the host nucleus. It carries out the reaction Hydrolysis of four peptide bonds in the viral precursor polyprotein, commonly with Asp or Glu in the P6 position, Cys or Thr in P1 and Ser or Ala in P1'.. The catalysed reaction is a ribonucleoside 5'-triphosphate + H2O = a ribonucleoside 5'-diphosphate + phosphate + H(+). The enzyme catalyses ATP + H2O = ADP + phosphate + H(+). It catalyses the reaction RNA(n) + a ribonucleoside 5'-triphosphate = RNA(n+1) + diphosphate. Functionally, packages viral RNA to form a viral nucleocapsid, and promotes virion budding. Participates in the viral particle production as a result of its interaction with the non-structural protein 5A. Binds RNA and may function as a RNA chaperone to induce the RNA structural rearrangements taking place during virus replication. Modulates viral translation initiation by interacting with viral IRES and 40S ribosomal subunit. Probably affects various cell signaling pathways, host immunity and lipid metabolism. In terms of biological role, forms a heterodimer with envelope glycoprotein E2, which mediates virus attachment to the host cell, virion internalization through clathrin-dependent endocytosis and fusion with host membrane. Fusion with the host cell is most likely mediated by both E1 and E2, through conformational rearrangements of the heterodimer required for fusion rather than a classical class II fusion mechanism. Its function is as follows. Forms a heterodimer with envelope glycoprotein E1, which mediates virus attachment to the host cell, virion internalization through clathrin-dependent endocytosis and fusion with host membrane. Fusion with the host cell is most likely mediated by both E1 and E2, through conformational rearrangements of the heterodimer required for fusion rather than a classical class II fusion mechanism. May function as a multimeric ion channel protein (viroporin). Functionally, cysteine protease required for the proteolytic auto-cleavage between the non-structural proteins NS2 and NS3. The N-terminus of NS3 is required for the function of NS2 protease (active region NS2-3). Promotes the initiation of viral particle assembly by mediating the interaction between structural and non-structural proteins. In terms of biological role, displays three enzymatic activities: serine protease with a chymotrypsin-like fold, NTPase and RNA helicase. NS3 serine protease, in association with NS4A, is responsible for the cleavages of NS3-NS4A, NS4A-NS4B, NS4B-NS5A and NS5A-NS5B. The NS3/NS4A complex prevents phosphorylation of host IRF3, thus preventing the establishment of dsRNA induced antiviral state. NS3 RNA helicase binds to RNA and unwinds both dsDNA and dsRNA in the 3' to 5' direction, and likely resolves RNA complicated stable secondary structures in the template strand. Cleaves host MAVS/CARDIF thereby preventing the establishment of an antiviral state. Its function is as follows. Induces a specific membrane alteration that serves as a scaffold for the virus replication complex. This membrane alteration gives rise to the so-called ER-derived membranous web that contains the replication complex. NS4B self-interaction contributes to its function in membranous web formation. Phosphorylated protein that is indispensable for viral replication and assembly. Functionally, RNA-dependent RNA polymerase that performs primer-template recognition and RNA synthesis during viral replication. Initiates RNA transcription/replication at a flavin adenine dinucleotide (FAD), resulting in a 5'- FAD cap on viral RNAs. In this way, recognition of viral 5' RNA by host pattern recognition receptors can be bypassed, thereby evading activation of antiviral pathways. In Hepatitis GB virus B (GBV-B), this protein is Genome polyprotein.